The chain runs to 786 residues: Endonuclease MutS2 (786 aa).

335-342 is a binding site for ATP; that stretch reads GPNTGGKT. The interval 529–549 is disordered; that stretch reads SQKNAERERKEAEEHRKQSEK. A Smr domain is found at 711 to 786; sequence LDLRGERYED…GLGVTVVELK (76 aa).

It belongs to the DNA mismatch repair MutS family. MutS2 subfamily. Homodimer. Binds to stalled ribosomes, contacting rRNA.

Functionally, endonuclease that is involved in the suppression of homologous recombination and thus may have a key role in the control of bacterial genetic diversity. Its function is as follows. Acts as a ribosome collision sensor, splitting the ribosome into its 2 subunits. Detects stalled/collided 70S ribosomes which it binds and splits by an ATP-hydrolysis driven conformational change. Acts upstream of the ribosome quality control system (RQC), a ribosome-associated complex that mediates the extraction of incompletely synthesized nascent chains from stalled ribosomes and their subsequent degradation. Probably generates substrates for RQC. The sequence is that of Endonuclease MutS2 from Bacillus mycoides (strain KBAB4) (Bacillus weihenstephanensis).